A 945-amino-acid polypeptide reads, in one-letter code: Translation initiation factor IF-2 (945 aa).

Disordered stretches follow at residues 52–80 (RSHG…DSSG) and 96–357 (MKRD…FQAP). The segment covering 153-175 (PEPEPIVEPEPEPEPEPEPEPQP) has biased composition (acidic residues). Basic and acidic residues-rich tracts occupy residues 215 to 283 (DEER…KEAA) and 294 to 310 (AKTE…RTAR). The tr-type G domain maps to 445 to 614 (PRAPVVTVMG…LLQAEVLELT (170 aa)). Residues 454 to 461 (GHVDHGKT) form a G1 region. Position 454 to 461 (454 to 461 (GHVDHGKT)) interacts with GTP. Positions 479-483 (GITQH) are G2. A G3 region spans residues 500 to 503 (DTPG). GTP-binding positions include 500-504 (DTPGH) and 554-557 (NKID). The segment at 554-557 (NKID) is G4. The tract at residues 590 to 592 (SAK) is G5.

This sequence belongs to the TRAFAC class translation factor GTPase superfamily. Classic translation factor GTPase family. IF-2 subfamily.

It is found in the cytoplasm. In terms of biological role, one of the essential components for the initiation of protein synthesis. Protects formylmethionyl-tRNA from spontaneous hydrolysis and promotes its binding to the 30S ribosomal subunits. Also involved in the hydrolysis of GTP during the formation of the 70S ribosomal complex. The sequence is that of Translation initiation factor IF-2 from Aromatoleum aromaticum (strain DSM 19018 / LMG 30748 / EbN1) (Azoarcus sp. (strain EbN1)).